The chain runs to 194 residues: Alkyl hydroperoxide reductase AhpD (194 aa).

Catalysis depends on C132, which acts as the Proton donor. A disulfide bridge links C132 with C135. C135 acts as the Cysteine sulfenic acid (-SOH) intermediate in catalysis.

This sequence belongs to the AhpD family.

The enzyme catalyses N(6)-[(R)-dihydrolipoyl]-L-lysyl-[lipoyl-carrier protein] + a hydroperoxide = N(6)-[(R)-lipoyl]-L-lysyl-[lipoyl-carrier protein] + an alcohol + H2O. Antioxidant protein with alkyl hydroperoxidase activity. Required for the reduction of the AhpC active site cysteine residues and for the regeneration of the AhpC enzyme activity. The chain is Alkyl hydroperoxide reductase AhpD from Koribacter versatilis (strain Ellin345).